Consider the following 275-residue polypeptide: Formamidopyrimidine-DNA glycosylase (275 aa).

P2 (schiff-base intermediate with DNA) is an active-site residue. The active-site Proton donor is the E3. K58 acts as the Proton donor; for beta-elimination activity in catalysis. DNA-binding residues include H89, R108, and K151. The segment at 236 to 275 adopts an FPG-type; degenerate zinc-finger fold; sequence KVYDRAGQPCERCPGPAACAGISRTVQSGRATYFCARTQK. Catalysis depends on R265, which acts as the Proton donor; for delta-elimination activity.

It belongs to the FPG family. Monomer. It depends on Zn(2+) as a cofactor.

The enzyme catalyses Hydrolysis of DNA containing ring-opened 7-methylguanine residues, releasing 2,6-diamino-4-hydroxy-5-(N-methyl)formamidopyrimidine.. The catalysed reaction is 2'-deoxyribonucleotide-(2'-deoxyribose 5'-phosphate)-2'-deoxyribonucleotide-DNA = a 3'-end 2'-deoxyribonucleotide-(2,3-dehydro-2,3-deoxyribose 5'-phosphate)-DNA + a 5'-end 5'-phospho-2'-deoxyribonucleoside-DNA + H(+). Its function is as follows. Involved in base excision repair of DNA damaged by oxidation or by mutagenic agents. Acts as a DNA glycosylase that recognizes and removes damaged bases. Has a preference for oxidized purines, such as 7,8-dihydro-8-oxoguanine (8-oxoG). Has AP (apurinic/apyrimidinic) lyase activity and introduces nicks in the DNA strand. Cleaves the DNA backbone by beta-delta elimination to generate a single-strand break at the site of the removed base with both 3'- and 5'-phosphates. This Acidiphilium cryptum (strain JF-5) protein is Formamidopyrimidine-DNA glycosylase.